We begin with the raw amino-acid sequence, 149 residues long: Probable flagellum biosynthesis repressor protein FlbT (149 aa).

This sequence belongs to the FlbT family.

Has a post-transcriptional repressor function in flagellum biogenesis. Associates with the 5'-UTR of fljK mRNA and promotes its degradation. This chain is Probable flagellum biosynthesis repressor protein FlbT, found in Rhizobium etli (strain ATCC 51251 / DSM 11541 / JCM 21823 / NBRC 15573 / CFN 42).